Reading from the N-terminus, the 428-residue chain is Adenylosuccinate synthetase (428 aa).

GTP is bound by residues 12–18 (GDEGKGK) and 40–42 (GHT). The Proton acceptor role is filled by D13. Positions 13 and 40 each coordinate Mg(2+). IMP contacts are provided by residues 13–16 (DEGK), 38–41 (NAGH), T133, R147, N224, T239, and R303. H41 (proton donor) is an active-site residue. 299 to 305 (TTTGRRR) lines the substrate pocket. Residues R305, 331 to 333 (KLD), and 413 to 415 (GVG) each bind GTP.

The protein belongs to the adenylosuccinate synthetase family. Homodimer. Mg(2+) serves as cofactor.

It is found in the cytoplasm. It catalyses the reaction IMP + L-aspartate + GTP = N(6)-(1,2-dicarboxyethyl)-AMP + GDP + phosphate + 2 H(+). Its pathway is purine metabolism; AMP biosynthesis via de novo pathway; AMP from IMP: step 1/2. In terms of biological role, plays an important role in the de novo pathway and in the salvage pathway of purine nucleotide biosynthesis. Catalyzes the first committed step in the biosynthesis of AMP from IMP. This chain is Adenylosuccinate synthetase, found in Coprinopsis cinerea (strain Okayama-7 / 130 / ATCC MYA-4618 / FGSC 9003) (Inky cap fungus).